A 437-amino-acid chain; its full sequence is Adenylosuccinate synthetase (437 aa).

GTP is bound by residues 12–18 (GDEGKGK) and 40–42 (GHT). The Proton acceptor role is filled by Asp-13. Mg(2+) contacts are provided by Asp-13 and Gly-40. Residues 13–16 (DEGK), 38–41 (NAGH), Thr-131, Arg-145, Gln-226, Thr-241, and Arg-305 contribute to the IMP site. The Proton donor role is filled by His-41. 301-307 (ATTGRRR) serves as a coordination point for substrate. GTP contacts are provided by residues Arg-307, 333–335 (KLD), and 415–417 (SVG).

It belongs to the adenylosuccinate synthetase family. In terms of assembly, homodimer. Mg(2+) serves as cofactor.

Its subcellular location is the cytoplasm. It carries out the reaction IMP + L-aspartate + GTP = N(6)-(1,2-dicarboxyethyl)-AMP + GDP + phosphate + 2 H(+). It functions in the pathway purine metabolism; AMP biosynthesis via de novo pathway; AMP from IMP: step 1/2. Functionally, plays an important role in the de novo pathway of purine nucleotide biosynthesis. Catalyzes the first committed step in the biosynthesis of AMP from IMP. The polypeptide is Adenylosuccinate synthetase (Desulfotalea psychrophila (strain LSv54 / DSM 12343)).